A 200-amino-acid polypeptide reads, in one-letter code: Eukaryotic translation initiation factor isoform 4E (200 aa).

The tract at residues 1-22 (MATEAPIEATEVPPASATETVA) is disordered. MRNA is bound by residues 44–49 (QGAAWG), Lys-76, and 94–95 (WE). An intrachain disulfide couples Cys-99 to Cys-138. MRNA is bound by residues 145 to 150 (RRSQDK) and 189 to 192 (KRER).

The protein belongs to the eukaryotic initiation factor 4E family. EIF4F is a multi-subunit complex, the composition of which varies with external and internal environmental conditions. It is composed of at least EIF4A, EIF4E and EIF4G. EIF4E is also known to interact with other partners. In higher plants two isoforms of EIF4F have been identified, named isoform EIF4F and isoform EIF(iso)4F. Isoform EIF4F has subunits p220 and p26, whereas isoform EIF(iso)4F has subunits p82 and p28. In terms of assembly, (Microbial infection) Interacts with viral genome-linked protein (VPg); this interaction is possible in susceptible hosts but impaired in resistant plants. In terms of processing, according to the redox status, the Cys-99-Cys-138 disulfide bridge may have a role in regulating protein function by affecting its ability to bind capped mRNA. In terms of tissue distribution, expressed ubiquitously in seedlings, roots, leaves, sepals, petals, anthers and dehisced pollen, with highest levels in pollen, maturing anthers and roots. Strongly expressed in susceptible plants but not in resistant ones.

Its subcellular location is the cytoplasm. It localises to the nucleus. Component of the protein complex eIF4F, which is involved in the recognition of the mRNA cap, ATP-dependent unwinding of 5'-terminal secondary structure and recruitment of mRNA to the ribosome. Recognizes and binds the 7-methylguanosine-containing mRNA cap during an early step in the initiation of protein synthesis and facilitates ribosome binding by inducing the unwinding of the mRNAs secondary structures. Key component of recessive resistance to potyviruses. In terms of biological role, (Microbial infection) Susceptibility host factor required for viral infection (e.g. potato virus Y (PVY) and pepper mottle virus (PepMoV)) by recruiting viral RNAs to the host ribosomal complex via an interaction with viral genome-linked protein (VPg). This Nicotiana tabacum (Common tobacco) protein is Eukaryotic translation initiation factor isoform 4E.